Consider the following 195-residue polypeptide: PRS fimbrial minor pilin protein (195 aa).

A signal peptide spans 1–22; the sequence is MRLRFSVPLFFFGCVFVHGVFA. A disulfide bond links cysteine 58 and cysteine 97.

Belongs to the fimbrial protein family.

The protein resides in the secreted. It localises to the fimbrium. In terms of biological role, fimbriae (also called pili), polar filaments radiating from the surface of the bacterium to a length of 0.5-1.5 micrometers and numbering 100-300 per cell, enable bacteria to colonize the epithelium of specific host organs. Functionally, seems to anchor the pilus to the bacterial cell. In addition the stoichiometric relationship between PrsH and PrsA determines the pilus length. The chain is PRS fimbrial minor pilin protein (prsH) from Escherichia coli.